Consider the following 486-residue polypeptide: MSEVPHFVLYEHAAGYALMKIKEFDDAGLILQEVDAAHADGYKFSQIVELASFDPFKNTEAALENCNSISEGLAHPDLTNFLQKSLPKKKKHVVLGINDSKLAGSLTEAFPDLKLVFGGVITEILRGTRVHFERLAKNLPHHSLSKAQLSLGHSYSRSKVKFDVHRVDNMVIQSIALLDQLDKDINLFGMRIREWYSYHYPELFRLAPDQYKYSRLAVAILDRNKMAENENLENEILEILDNDSEKTAQIIEAARTSMGMDISDLDLENIKRFAARVSSLMEYRQQLHEYIKDRMDHCAPSLSALIGEQVGARLISHAGSLTNLAKYPASTVQILGAEKALFRALKTRSNTPKYGLLFHSSFIGKAGTKNKGRVSRYLANKCSIAARVDCFSETPVSTYGEFLRQQVEDRLEYFTSGTVPKKNIDVMKEAEEAAVEVKEKVIKKKKKAAKKAKRLAEESVTATAEAEVDEDAPKPKKKKKSKAGDE.

Residues 298 to 416 (CAPSLSALIG…VEDRLEYFTS (119 aa)) form the Nop domain. The interval 450 to 486 (KKAKRLAEESVTATAEAEVDEDAPKPKKKKKSKAGDE) is disordered. The segment covering 475 to 486 (PKKKKKSKAGDE) has biased composition (basic residues).

It belongs to the NOP5/NOP56 family.

Its subcellular location is the nucleus. It localises to the nucleolus. In terms of biological role, required for 60S ribosomal subunit synthesis. This Caenorhabditis elegans protein is Nucleolar protein 56.